The sequence spans 405 residues: S-adenosylmethionine synthase (405 aa).

Position 19 (His-19) interacts with ATP. Asp-21 is a Mg(2+) binding site. Position 47 (Glu-47) interacts with K(+). Residues Glu-60 and Gln-103 each coordinate L-methionine. Residues Gln-103 to Lys-113 form a flexible loop region. Residues Asp-179 to Lys-181, Arg-246 to Phe-247, Asp-255, Arg-261 to Lys-262, Ala-278, and Lys-282 contribute to the ATP site. Asp-255 provides a ligand contact to L-methionine. Lys-286 contacts L-methionine.

It belongs to the AdoMet synthase family. Homotetramer; dimer of dimers. It depends on Mg(2+) as a cofactor. The cofactor is K(+).

The protein resides in the cytoplasm. It catalyses the reaction L-methionine + ATP + H2O = S-adenosyl-L-methionine + phosphate + diphosphate. It functions in the pathway amino-acid biosynthesis; S-adenosyl-L-methionine biosynthesis; S-adenosyl-L-methionine from L-methionine: step 1/1. In terms of biological role, catalyzes the formation of S-adenosylmethionine (AdoMet) from methionine and ATP. The overall synthetic reaction is composed of two sequential steps, AdoMet formation and the subsequent tripolyphosphate hydrolysis which occurs prior to release of AdoMet from the enzyme. The polypeptide is S-adenosylmethionine synthase (Shouchella clausii (strain KSM-K16) (Alkalihalobacillus clausii)).